Reading from the N-terminus, the 221-residue chain is Cytidylate kinase (221 aa).

Position 11–19 (11–19 (GPTASGKGT)) interacts with ATP.

Belongs to the cytidylate kinase family. Type 1 subfamily.

It localises to the cytoplasm. It catalyses the reaction CMP + ATP = CDP + ADP. It carries out the reaction dCMP + ATP = dCDP + ADP. The polypeptide is Cytidylate kinase (Cupriavidus pinatubonensis (strain JMP 134 / LMG 1197) (Cupriavidus necator (strain JMP 134))).